The sequence spans 618 residues: Phostensin (618 aa).

Residues 15 to 33 are compositionally biased toward basic and acidic residues; sequence RRQEEAAVRGREKAERERL. The tract at residues 15–505 is disordered; the sequence is RRQEEAAVRG…PATADAAVPG (491 aa). Ser-54 carries the phosphoserine modification. Residues 96–109 show a composition bias toward low complexity; sequence QQQQQQQQQQQQQQ. Basic and acidic residues-rich tracts occupy residues 110–160 and 173–197; these read RSEE…ERRL and LESRDWRQSPGEAGDRSSRLSEVRK. Phosphoserine occurs at positions 131, 139, 181, and 201. The residue at position 205 (Thr-205) is a Phosphothreonine. A Phosphoserine modification is found at Ser-231. Composition is skewed to basic and acidic residues over residues 234–245 and 271–289; these read DSDHEKLGLTDA and SGEERKDCLEECGRKEERT. Residues 308-319 show a composition bias toward low complexity; it reads EAAGSSSGGVEA. Residues 348–358 show a composition bias toward basic and acidic residues; the sequence is KVRDRTPRDTE. The span at 429-451 shows a compositional bias: pro residues; the sequence is RPPPAAPLSPPPPAPPAPQPPGD. At Ser-437 the chain carries Phosphoserine. Residue Lys-462 is modified to N6-acetyllysine. Low complexity predominate over residues 485-505; sequence APPAAAATPATPATADAAVPG. Ser-535 is subject to Phosphoserine. Positions 556–594 are disordered; the sequence is YQYPSESSVLEELGPEPEAPSAPSPPAAQPDDEEDEEEL. The span at 572 to 583 shows a compositional bias: pro residues; it reads PEAPSAPSPPAA. Residues 585–594 are compositionally biased toward acidic residues; sequence PDDEEDEEEL.

As to quaternary structure, interacts with Protein phosphatase 1 (PP1).

Its subcellular location is the cytoplasm. It localises to the cytoskeleton. Its function is as follows. May target protein phosphatase 1 to F-actin cytoskeleton. The chain is Phostensin (PPP1R18) from Sus scrofa (Pig).